The chain runs to 213 residues: Orotate phosphoribosyltransferase (213 aa).

Lys-26 is a 5-phospho-alpha-D-ribose 1-diphosphate binding site. 34-35 (FF) contacts orotate. 5-phospho-alpha-D-ribose 1-diphosphate is bound by residues 72 to 73 (YK), Arg-99, Lys-100, Lys-103, His-105, and 124 to 132 (DDVITAGTA). Residues Thr-128 and Arg-156 each contribute to the orotate site.

The protein belongs to the purine/pyrimidine phosphoribosyltransferase family. PyrE subfamily. In terms of assembly, homodimer. Requires Mg(2+) as cofactor.

The enzyme catalyses orotidine 5'-phosphate + diphosphate = orotate + 5-phospho-alpha-D-ribose 1-diphosphate. Its pathway is pyrimidine metabolism; UMP biosynthesis via de novo pathway; UMP from orotate: step 1/2. Its function is as follows. Catalyzes the transfer of a ribosyl phosphate group from 5-phosphoribose 1-diphosphate to orotate, leading to the formation of orotidine monophosphate (OMP). The protein is Orotate phosphoribosyltransferase of Haemophilus influenzae (strain ATCC 51907 / DSM 11121 / KW20 / Rd).